The following is a 187-amino-acid chain: Orotate phosphoribosyltransferase (187 aa).

Residues Arg103, Lys104, Lys107, and 129-137 (EDVTTSGGS) each bind 5-phospho-alpha-D-ribose 1-diphosphate. Positions 133 and 161 each coordinate orotate.

Belongs to the purine/pyrimidine phosphoribosyltransferase family. PyrE subfamily. Homodimer. Mg(2+) serves as cofactor.

The enzyme catalyses orotidine 5'-phosphate + diphosphate = orotate + 5-phospho-alpha-D-ribose 1-diphosphate. It functions in the pathway pyrimidine metabolism; UMP biosynthesis via de novo pathway; UMP from orotate: step 1/2. Its function is as follows. Catalyzes the transfer of a ribosyl phosphate group from 5-phosphoribose 1-diphosphate to orotate, leading to the formation of orotidine monophosphate (OMP). In Methanosarcina mazei (strain ATCC BAA-159 / DSM 3647 / Goe1 / Go1 / JCM 11833 / OCM 88) (Methanosarcina frisia), this protein is Orotate phosphoribosyltransferase.